The chain runs to 178 residues: Acireductone dioxygenase (178 aa).

Fe(2+) contacts are provided by His-87, His-89, Glu-93, and His-132. His-87, His-89, Glu-93, and His-132 together coordinate Ni(2+).

The protein belongs to the acireductone dioxygenase (ARD) family. Fe(2+) serves as cofactor. The cofactor is Ni(2+).

The protein resides in the cytoplasm. It localises to the nucleus. It carries out the reaction 1,2-dihydroxy-5-(methylsulfanyl)pent-1-en-3-one + O2 = 4-methylsulfanyl-2-oxobutanoate + formate + 2 H(+). The catalysed reaction is 1,2-dihydroxy-5-(methylsulfanyl)pent-1-en-3-one + O2 = 3-(methylsulfanyl)propanoate + CO + formate + 2 H(+). It functions in the pathway amino-acid biosynthesis; L-methionine biosynthesis via salvage pathway; L-methionine from S-methyl-5-thio-alpha-D-ribose 1-phosphate: step 5/6. Its function is as follows. Catalyzes 2 different reactions between oxygen and the acireductone 1,2-dihydroxy-3-keto-5-methylthiopentene (DHK-MTPene) depending upon the metal bound in the active site. Fe-containing acireductone dioxygenase (Fe-ARD) produces formate and 2-keto-4-methylthiobutyrate (KMTB), the alpha-ketoacid precursor of methionine in the methionine recycle pathway. Ni-containing acireductone dioxygenase (Ni-ARD) produces methylthiopropionate, carbon monoxide and formate, and does not lie on the methionine recycle pathway. This chain is Acireductone dioxygenase, found in Candida albicans (strain SC5314 / ATCC MYA-2876) (Yeast).